A 262-amino-acid chain; its full sequence is ATP synthase subunit a (262 aa).

The next 5 helical transmembrane spans lie at Val-26–Ser-46, Val-86–Ile-106, Asp-130–Ile-150, Leu-204–Leu-226, and Leu-240–Ala-260.

This sequence belongs to the ATPase A chain family. In terms of assembly, F-type ATPases have 2 components, CF(1) - the catalytic core - and CF(0) - the membrane proton channel. CF(1) has five subunits: alpha(3), beta(3), gamma(1), delta(1), epsilon(1). CF(0) has three main subunits: a(1), b(2) and c(9-12). The alpha and beta chains form an alternating ring which encloses part of the gamma chain. CF(1) is attached to CF(0) by a central stalk formed by the gamma and epsilon chains, while a peripheral stalk is formed by the delta and b chains.

The protein localises to the cell inner membrane. Functionally, key component of the proton channel; it plays a direct role in the translocation of protons across the membrane. This is ATP synthase subunit a from Haemophilus influenzae (strain 86-028NP).